We begin with the raw amino-acid sequence, 183 residues long: Ribulose bisphosphate carboxylase small subunit, chloroplastic 7 (183 aa).

A chloroplast-targeting transit peptide spans 1–43; it reads MAAAMMNKTVVVGKESVKGGVAPKVAMSRGGFLNSGIMKKDRD.

It belongs to the RuBisCO small chain family. Heterohexadecamer of 8 large and 8 small subunits.

It is found in the plastid. Its subcellular location is the chloroplast. Its function is as follows. RuBisCO catalyzes two reactions: the carboxylation of D-ribulose 1,5-bisphosphate, the primary event in carbon dioxide fixation, as well as the oxidative fragmentation of the pentose substrate. Both reactions occur simultaneously and in competition at the same active site. Although the small subunit is not catalytic it is essential for maximal activity. The sequence is that of Ribulose bisphosphate carboxylase small subunit, chloroplastic 7 from Acetabularia peniculus (Green alga).